Reading from the N-terminus, the 938-residue chain is Isoleucine--tRNA ligase (938 aa).

Positions 58–68 (PYANGSIHIGH) match the 'HIGH' region motif. Lys-183 carries the post-translational modification N6-acetyllysine. Glu-561 is an L-isoleucyl-5'-AMP binding site. Residues 602–606 (KMSKS) carry the 'KMSKS' region motif. Lys-605 contacts ATP. Residues Cys-901, Cys-904, Cys-921, and Cys-924 each coordinate Zn(2+).

This sequence belongs to the class-I aminoacyl-tRNA synthetase family. IleS type 1 subfamily. Monomer. It depends on Zn(2+) as a cofactor.

The protein resides in the cytoplasm. The catalysed reaction is tRNA(Ile) + L-isoleucine + ATP = L-isoleucyl-tRNA(Ile) + AMP + diphosphate. Catalyzes the attachment of isoleucine to tRNA(Ile). As IleRS can inadvertently accommodate and process structurally similar amino acids such as valine, to avoid such errors it has two additional distinct tRNA(Ile)-dependent editing activities. One activity is designated as 'pretransfer' editing and involves the hydrolysis of activated Val-AMP. The other activity is designated 'posttransfer' editing and involves deacylation of mischarged Val-tRNA(Ile). This Escherichia coli O17:K52:H18 (strain UMN026 / ExPEC) protein is Isoleucine--tRNA ligase.